Consider the following 349-residue polypeptide: Core protein VP7 (349 aa).

N-linked (GlcNAc...) asparagine; by host glycosylation occurs at Asn287.

It belongs to the orbivirus VP7 family. Homotrimer that assemble in a complex of 260 capsomers on an inner scaffold composed of VP3.

The protein localises to the virion. Functionally, the VP7 protein is one of the five proteins (with VP1, VP3, VP4, and VP6) which form the inner capsid of the virus. The polypeptide is Core protein VP7 (Segment-7) (Antilocapra americana (Pronghorn)).